Here is a 155-residue protein sequence, read N- to C-terminus: Small ribosomal subunit protein uS7 (155 aa).

This sequence belongs to the universal ribosomal protein uS7 family. In terms of assembly, part of the 30S ribosomal subunit. Contacts proteins S9 and S11.

Its function is as follows. One of the primary rRNA binding proteins, it binds directly to 16S rRNA where it nucleates assembly of the head domain of the 30S subunit. Is located at the subunit interface close to the decoding center, probably blocks exit of the E-site tRNA. This Xanthomonas axonopodis pv. citri (strain 306) protein is Small ribosomal subunit protein uS7.